Reading from the N-terminus, the 210-residue chain is Ribosomal RNA small subunit methyltransferase G (210 aa).

S-adenosyl-L-methionine is bound by residues G80, L85, 131–132 (VE), and R146.

It belongs to the methyltransferase superfamily. RNA methyltransferase RsmG family.

Its subcellular location is the cytoplasm. The enzyme catalyses guanosine(527) in 16S rRNA + S-adenosyl-L-methionine = N(7)-methylguanosine(527) in 16S rRNA + S-adenosyl-L-homocysteine. Functionally, specifically methylates the N7 position of guanine in position 527 of 16S rRNA. The chain is Ribosomal RNA small subunit methyltransferase G from Pasteurella multocida (strain Pm70).